The primary structure comprises 447 residues: MAGVGGGNDFQWCFSQVKGAIDEDVAEADIISTVEFNYSGELLATGDKGGRVVIFQREQESKNRPLSRGEYNVYSTFQSHEPEFDYLKSLEIEEKINKIRWLPQQNAAHFLLSTNDKTIKLWKISERDKRAEGYNLKDEDGRLRDPFRITSLRVPVLMPMDLMVEASPRRIFANAHTYHINSISVNSDYETYLSADDLRINLWHLEITDRSFNIVDIKPANMEELTEVITAAECHPHQCNVFVYSSSKGTIRLCDMRAAALCDRHSKFFEEPEDPSSRSFFSEIISSISDVKFSHSGRYMMTRDYLSVKVWDLNMENRPVETYQVHEYLRSKLCSLYENDCIFDKFECCWNGSDSAIMTGSYNNFFRMFDRNTRRDITLEASRESSKPRAMLKPRKVCTGGKRKKDEISVDSLDFNKKILHTAWHPKENVIAVAATNNLYIFQDKMN.

7 WD repeats span residues 26 to 65, 91 to 132, 175 to 213, 224 to 264, 283 to 321, 338 to 379, and 414 to 447; these read AEAD…KNRP, EIEE…KRAE, AHTY…RSFN, ELTE…LCDR, EIIS…RPVE, ENDC…DITL, and DFNK…DKMN.

Belongs to the phosphatase 2A regulatory subunit B family. As to quaternary structure, PP2A consists of a common heterodimeric core enzyme, composed of a 36 kDa catalytic subunit (subunit C) and a 65 kDa constant regulatory subunit (PR65 or subunit A), that associates with a variety of regulatory subunits.

It is found in the cytoplasm. Its function is as follows. Substrate-recognition subunit of protein phosphatase 2A (PP2A) that plays a key role in cell cycle by controlling mitosis entry and exit. The activity of PP2A complexes containing PPP2R2D (PR55-delta) fluctuate during the cell cycle: the activity is high in interphase and low in mitosis. This Danio rerio (Zebrafish) protein is Serine/threonine-protein phosphatase 2A 55 kDa regulatory subunit B delta isoform (ppp2r2d).